The primary structure comprises 1442 residues: DNA polymerase III PolC-type (1442 aa).

The Exonuclease domain maps to Tyr-426 to Phe-582.

Belongs to the DNA polymerase type-C family. PolC subfamily.

The protein resides in the cytoplasm. The enzyme catalyses DNA(n) + a 2'-deoxyribonucleoside 5'-triphosphate = DNA(n+1) + diphosphate. Functionally, required for replicative DNA synthesis. This DNA polymerase also exhibits 3' to 5' exonuclease activity. The chain is DNA polymerase III PolC-type from Staphylococcus epidermidis (strain ATCC 12228 / FDA PCI 1200).